The primary structure comprises 1967 residues: RNA replication polyprotein (1967 aa).

The 190-residue stretch at 63-252 (SPYAGFPHSH…YEQPLSGGYL (190 aa)) folds into the Alphavirus-like MT domain. The region spanning 750 to 841 (TYDCMLAQRY…RVSYTFRRLA (92 aa)) is the Fe2OG dioxygenase domain. The Fe cation site is built by His768, Asp770, and His823. Position 832 (Arg832) interacts with 2-oxoglutarate. In terms of domain architecture, OTU spans 884 to 991 (FNVQCVPGDG…GSHFEPLEPK (108 aa)). One can recognise a Peptidase C23 domain in the interval 990-1080 (PKEMCVVKAI…MTTDHLSYDG (91 aa)). Residues Cys994 and His1075 contribute to the active site. A (+)RNA virus helicase ATP-binding domain is found at 1133–1308 (GSTGVMCSEL…DGIEYKFNIL (176 aa)). 1166-1173 (GTFGCGKS) lines the ATP pocket. Residues 1309-1455 (SRRFQSSLFR…SARQEDLRRM (147 aa)) form the (+)RNA virus helicase C-terminal domain. The RdRp catalytic domain maps to 1748 to 1855 (GVCTESDYEA…NGRLHVSSKH (108 aa)).

This sequence belongs to the potexviruses/carlaviruses RNA replication protein family. Fe(2+) is required as a cofactor. Specific enzymatic cleavages by the viral protease yield mature proteins.

The enzyme catalyses ATP + H2O = ADP + phosphate + H(+). The catalysed reaction is RNA(n) + a ribonucleoside 5'-triphosphate = RNA(n+1) + diphosphate. Functionally, RNA-directed RNA polymerase involved in viral RNA replication. Protease: Thiol protease that cleaves the polyprotein. This Vaccinium corymbosum (Highbush blueberry) protein is RNA replication polyprotein.